The chain runs to 550 residues: Hydroxylamine reductase (550 aa).

[2Fe-2S] cluster-binding residues include Cys3, Cys6, Cys18, and Cys25. Positions 249, 273, 317, 405, 433, 458, 492, and 494 each coordinate hybrid [4Fe-2O-2S] cluster. Residue Cys405 is modified to Cysteine persulfide.

Belongs to the HCP family. [2Fe-2S] cluster serves as cofactor. Hybrid [4Fe-2O-2S] cluster is required as a cofactor.

It is found in the cytoplasm. It carries out the reaction A + NH4(+) + H2O = hydroxylamine + AH2 + H(+). With respect to regulation, inhibited by oxygen. Activated by cyanide except in the prolonged presence of excess cyanide, where the enzyme is inactivated. Functionally, catalyzes the reduction of hydroxylamine to form NH(3) and H(2)O. Is also able to reduce hydroxylamine analogs such as methylhydroxylamine and hydroxyquinone. Might have a role as a scavenger of potentially toxic by-products of nitrate metabolism. The chain is Hydroxylamine reductase from Escherichia coli (strain K12).